We begin with the raw amino-acid sequence, 499 residues long: Replication factor C large subunit (499 aa).

Residue Gly-50–Thr-57 coordinates ATP. The segment at Glu-428–Lys-499 is disordered. Acidic residues predominate over residues Ala-436 to Glu-472. A compositionally biased stretch (basic and acidic residues) spans Thr-473–Lys-484.

The protein belongs to the activator 1 small subunits family. RfcL subfamily. Heteromultimer composed of small subunits (RfcS) and large subunits (RfcL).

In terms of biological role, part of the RFC clamp loader complex which loads the PCNA sliding clamp onto DNA. In Thermococcus kodakarensis (strain ATCC BAA-918 / JCM 12380 / KOD1) (Pyrococcus kodakaraensis (strain KOD1)), this protein is Replication factor C large subunit.